A 160-amino-acid chain; its full sequence is MIKKKKKKSYTSVYALGQYISMSTHKARRVIDQIRGRSYEEALMILELMPYRGCYPIFKLVYSAAANASHNKGFKETNLVISKAEVNQGNTVKKLKPRARGRSYPIKRPTCHITIVLEDRSFDQQYDEYLMYLKNPGYRNAKINLPCYETYSSGGLWDKK.

This sequence belongs to the universal ribosomal protein uL22 family. Part of the 50S ribosomal subunit.

The protein resides in the plastid. It is found in the chloroplast. This protein binds specifically to 23S rRNA. Its function is as follows. The globular domain of the protein is located near the polypeptide exit tunnel on the outside of the subunit, while an extended beta-hairpin is found that lines the wall of the exit tunnel in the center of the 70S ribosome. The sequence is that of Large ribosomal subunit protein uL22c (rpl22) from Aethionema cordifolium (Lebanon stonecress).